Reading from the N-terminus, the 253-residue chain is 5-oxoprolinase subunit A (253 aa).

The protein belongs to the LamB/PxpA family. Forms a complex composed of PxpA, PxpB and PxpC.

It carries out the reaction 5-oxo-L-proline + ATP + 2 H2O = L-glutamate + ADP + phosphate + H(+). In terms of biological role, catalyzes the cleavage of 5-oxoproline to form L-glutamate coupled to the hydrolysis of ATP to ADP and inorganic phosphate. This Bacillus cereus (strain AH187) protein is 5-oxoprolinase subunit A.